The following is a 228-amino-acid chain: MSVSEIFVELQGFLAAEQDIREEIRKVVQSLEQTAREILTLLQGVHQGTGFQDIPKRCLKAREHFSTVKTHLTSLKTKFPAEQYYRFHEHWRFVLQRLVFLAAFVVYLETETLVTREAVTEILGIEPDREKGFHLDVEDYLSGVLILASELSRLSVNSVTAGDYSRPLHISTFINELDSGFRLLNLKNDSLRKRYDGLKYDVKKVEEVVYDLSIRGFNKETAAACGEK.

Residues 86 to 90 form a DNA/RNA binding region; it reads RFHEH. The tract at residues 177–198 is leucine-zipper; the sequence is LDSGFRLLNLKNDSLRKRYDGL. At K187 the chain carries N6-acetyllysine. S190 bears the Phosphoserine mark. K199 is modified (N6-acetyllysine).

This sequence belongs to the translin family. In terms of assembly, ring-shaped heterooctamer of six TSN and two TSNAX subunits, DNA/RNA binding occurs inside the ring.

Its subcellular location is the cytoplasm. It localises to the nucleus. DNA-binding protein that specifically recognizes consensus sequences at the breakpoint junctions in chromosomal translocations, mostly involving immunoglobulin (Ig)/T-cell receptor gene segments. Seems to recognize single-stranded DNA ends generated by staggered breaks occurring at recombination hot spots. Functionally, exhibits both single-stranded and double-stranded endoribonuclease activity. May act as an activator of RNA-induced silencing complex (RISC) by facilitating endonucleolytic cleavage of the siRNA passenger strand. This is Translin (Tsn) from Mus musculus (Mouse).